A 120-amino-acid chain; its full sequence is Cytochrome c6 (120 aa).

A signal peptide spans Met1–Ala35. Positions 49, 52, 53, and 93 each coordinate heme c.

The protein belongs to the cytochrome c family. PetJ subfamily. In terms of assembly, monomer. In terms of processing, binds 1 heme c group covalently per subunit.

Its subcellular location is the cellular thylakoid lumen. Functionally, functions as an electron carrier between membrane-bound cytochrome b6-f and photosystem I in oxygenic photosynthesis. This Synechocystis sp. (strain ATCC 27184 / PCC 6803 / Kazusa) protein is Cytochrome c6 (petJ).